The sequence spans 130 residues: MAITQNYGTGRRKSSTARVFLRKGTGNITVNNRPLDEFFGRETARMIVRQPLELTKNTESFDILVTASGGGTTGQAGAIRLGIARALVEYDETLKSELRKAGFMTRDAREVERKKVGLHKARRATQFSKR.

The protein belongs to the universal ribosomal protein uS9 family.

In Xanthomonas campestris pv. campestris (strain 8004), this protein is Small ribosomal subunit protein uS9.